A 160-amino-acid polypeptide reads, in one-letter code: RxLR effector protein PexRD44 (160 aa).

The first 21 residues, 1–21 (MRLLLWVLISMLSIALSSCAA), serve as a signal peptide directing secretion. The RxLR-dEER signature appears at 54-76 (RFLRGESSKIVNLKQEEGVFEER).

Belongs to the RxLR effector family.

The protein resides in the secreted. Its subcellular location is the host cell membrane. It localises to the host nucleus. It is found in the host nucleolus. Effector that is involved in host plant infection. Contributes to virulence during the early infection stage, by inhibiting plant defense responses induced by both PAMP-triggered immunity (PTI) and effector-triggered immunity (ETI). The sequence is that of RxLR effector protein PexRD44 from Phytophthora infestans (strain T30-4) (Potato late blight agent).